The primary structure comprises 442 residues: Cysteine proteinase 4 (442 aa).

A signal peptide spans 1-17; that stretch reads MRVLSFLCLLLVSYASA. The propeptide at 18 to 111 is activation peptide; sequence KQQFSELQYR…TEEEKIFSTP (94 aa). Cystine bridges form between Cys132–Cys178 and Cys169–Cys212. Cys135 is an active-site residue. N-linked (GlcNAc...) asparagine glycosylation is found at Asn228 and Asn254. A disulfide bond links Cys270 and Cys428. His277 is a catalytic residue. The segment at 286–396 is disordered; it reads SGSSSSSGSS…SGSGSGAVEA (111 aa). Residues 287–376 are compositionally biased toward low complexity; sequence GSSSSSGSSS…SASGQASASG (90 aa). The span at 377–391 shows a compositional bias: gly residues; the sequence is SGSGSGSGSGSGSGS. The active site involves Asn406.

Belongs to the peptidase C1 family. Post-translationally, glycosylated; contains GlcNAc-alpha-1-P-Ser residues and fucose.

The protein resides in the lysosome. The protein is Cysteine proteinase 4 (cprD) of Dictyostelium discoideum (Social amoeba).